We begin with the raw amino-acid sequence, 197 residues long: Protein GrpE (197 aa).

The segment at Met-1–Pro-39 is disordered.

It belongs to the GrpE family. In terms of assembly, homodimer.

The protein resides in the cytoplasm. Functionally, participates actively in the response to hyperosmotic and heat shock by preventing the aggregation of stress-denatured proteins, in association with DnaK and GrpE. It is the nucleotide exchange factor for DnaK and may function as a thermosensor. Unfolded proteins bind initially to DnaJ; upon interaction with the DnaJ-bound protein, DnaK hydrolyzes its bound ATP, resulting in the formation of a stable complex. GrpE releases ADP from DnaK; ATP binding to DnaK triggers the release of the substrate protein, thus completing the reaction cycle. Several rounds of ATP-dependent interactions between DnaJ, DnaK and GrpE are required for fully efficient folding. In Escherichia coli O157:H7 (strain EC4115 / EHEC), this protein is Protein GrpE.